Consider the following 154-residue polypeptide: Pro-corazonin (154 aa).

The N-terminal stretch at 1 to 19 is a signal peptide; that stretch reads MLRLLLLPLFLFTLSMCMG. At Q20 the chain carries Pyrrolidone carboxylic acid. N30 is modified (asparagine amide). A propeptide spanning residues 70 to 154 is cleaved from the precursor; it reads LERCLSQLQR…SAEPNVFGKH (85 aa).

Belongs to the corazonin family. As to expression, expression is restricted to 24 neurons in the larval CNS (8 in the brain and 16 in the ventral nerve cord) and 12-16 neurons in the pars lateralis of the adult brain.

It localises to the secreted. Functionally, cardioactive peptide. Corazonin is probably involved in the physiological regulation of the heart beat. Clock (Clk) and cycle (cyc) proteins negatively regulate Crz transcription in a cell-specific manner. This Drosophila simulans (Fruit fly) protein is Pro-corazonin (Crz).